The primary structure comprises 668 residues: UvrABC system protein B (668 aa).

In terms of domain architecture, Helicase ATP-binding spans arginine 25–glycine 414. Glycine 38–threonine 45 lines the ATP pocket. The Beta-hairpin motif lies at tyrosine 91–isoleucine 114. The region spanning aspartate 431–leucine 594 is the Helicase C-terminal domain. One can recognise a UVR domain in the interval lysine 627–glutamine 662.

This sequence belongs to the UvrB family. Forms a heterotetramer with UvrA during the search for lesions. Interacts with UvrC in an incision complex.

Its subcellular location is the cytoplasm. Its function is as follows. The UvrABC repair system catalyzes the recognition and processing of DNA lesions. A damage recognition complex composed of 2 UvrA and 2 UvrB subunits scans DNA for abnormalities. Upon binding of the UvrA(2)B(2) complex to a putative damaged site, the DNA wraps around one UvrB monomer. DNA wrap is dependent on ATP binding by UvrB and probably causes local melting of the DNA helix, facilitating insertion of UvrB beta-hairpin between the DNA strands. Then UvrB probes one DNA strand for the presence of a lesion. If a lesion is found the UvrA subunits dissociate and the UvrB-DNA preincision complex is formed. This complex is subsequently bound by UvrC and the second UvrB is released. If no lesion is found, the DNA wraps around the other UvrB subunit that will check the other stand for damage. The chain is UvrABC system protein B from Treponema pallidum (strain Nichols).